The primary structure comprises 605 residues: Elongation factor 4 (605 aa).

A tr-type G domain is found at 9-192 (GMIRNFCIIA…AIVARVPAPA (184 aa)). Residues 21-26 (DHGKST) and 139-142 (NKID) contribute to the GTP site.

The protein belongs to the TRAFAC class translation factor GTPase superfamily. Classic translation factor GTPase family. LepA subfamily.

The protein resides in the cell inner membrane. The enzyme catalyses GTP + H2O = GDP + phosphate + H(+). In terms of biological role, required for accurate and efficient protein synthesis under certain stress conditions. May act as a fidelity factor of the translation reaction, by catalyzing a one-codon backward translocation of tRNAs on improperly translocated ribosomes. Back-translocation proceeds from a post-translocation (POST) complex to a pre-translocation (PRE) complex, thus giving elongation factor G a second chance to translocate the tRNAs correctly. Binds to ribosomes in a GTP-dependent manner. The chain is Elongation factor 4 from Chlorobaculum tepidum (strain ATCC 49652 / DSM 12025 / NBRC 103806 / TLS) (Chlorobium tepidum).